The following is a 221-amino-acid chain: Ependymin (221 aa).

Residues 1 to 21 (MQAFAVAALSIWLCLGATTLA) form the signal peptide. N-linked (GlcNAc...) asparagine glycosylation is found at Asn37, Asn77, and Asn101.

This sequence belongs to the ependymin family. In terms of assembly, forms disulfide-linked dimers. In terms of processing, binds calcium through the terminal sialic acids. In terms of tissue distribution, EPDs are synthesized in the meninx and secreted in the cerebrospinal fluid.

It localises to the secreted. Functionally, may play a role in neural plasticity. May be involved during axon regeneration. This Esox lucius (Northern pike) protein is Ependymin (epd).